A 3912-amino-acid chain; its full sequence is Ubiquitin carboxyl-terminal hydrolase puf (3912 aa).

5 disordered regions span residues 101 to 172, 518 to 590, 660 to 688, 851 to 878, and 1491 to 1611; these read AQQQ…HKSH, NVTA…ISPE, DVPS…ECSD, VVSG…VQPS, and SRRG…PALS. Basic and acidic residues predominate over residues 106–133; the sequence is EQQRDEASAQAEAKESSAPAEEPKKEEP. Low complexity predominate over residues 134-143; the sequence is SGSAGEEAQG. Positions 150–164 are enriched in pro residues; sequence KKPPVGPCTPPPPQT. Low complexity predominate over residues 522 to 532; it reads SSSDSGSIEGS. Over residues 576–585 the composition is skewed to basic and acidic residues; sequence ICDPTTEKGK. The segment covering 660-687 has biased composition (acidic residues); sequence DVPSSDEADGEADGDGEGELLADSDECS. Over residues 862-876 the composition is skewed to polar residues; sequence KASQGSSTSGSTPVQ. Over residues 1511 to 1520 the composition is skewed to basic residues; sequence VKKSSMGRRR. Positions 1550 to 1567 are enriched in polar residues; the sequence is TPSTGLQDVETEASSSSG. Basic and acidic residues predominate over residues 1583–1594; that stretch reads KGETFEQEKERP. The segment covering 1600-1609 has biased composition (pro residues); the sequence is PPSPTPPPPA. The region spanning 2015–2380 is the USP domain; sequence VGLTNLGATC…SAYMLFYERR (366 aa). Cys2024 (nucleophile) is an active-site residue. The segment covering 2249–2263 has biased composition (basic and acidic residues); it reads YKEERERRQKEKEGA. Positions 2249 to 2274 are disordered; sequence YKEERERRQKEKEGADGSGDGNDNEK. The active-site Proton acceptor is His2305. 4 disordered regions span residues 2391-2529, 3322-3344, 3657-3776, and 3800-3912; these read ELLV…TSKA, QQSQ…LQQQ, SERF…EERE, and ASVP…PTQI. Composition is skewed to basic and acidic residues over residues 2402–2413 and 2433–2488; these read VEEKSEAEEPTK and EKDK…EKPT. A compositionally biased stretch (low complexity) spans 2504–2523; the sequence is NCDNHQQNNNSNSKASNDQQ. Over residues 3657–3703 the composition is skewed to basic and acidic residues; the sequence is SERFRKESERDPFPNKKQKRDSQKIKEKEHPQPESEKETSTENDKPS. A compositionally biased stretch (polar residues) spans 3706-3721; it reads SMESSGNAEQATDSTK. The span at 3741 to 3751 shows a compositional bias: acidic residues; sequence SDDETELEDEL. Residues 3766–3776 show a composition bias toward basic and acidic residues; that stretch reads TAQDRVNEERE. Residues 3865 to 3877 are compositionally biased toward polar residues; it reads PKTSQTNGSQQNE. Over residues 3878 to 3912 the composition is skewed to low complexity; it reads SPPAATSADTAPANPSPAPAAAVASTSQAASPTQI.

It belongs to the peptidase C19 family. In terms of assembly, interacts with Myc and ago.

The protein resides in the nucleus. It catalyses the reaction Thiol-dependent hydrolysis of ester, thioester, amide, peptide and isopeptide bonds formed by the C-terminal Gly of ubiquitin (a 76-residue protein attached to proteins as an intracellular targeting signal).. Its function is as follows. Ubiquitin hydrolase that can remove conjugated ubiquitin from target proteins and polyubiquitin chains. Essential for Myc-mediated cell growth and proliferation in developing eyes and wings. In the wing and eye, the deubiquitinating activity acts as an antagonist to the SCF E3 ubiquitin-protein ligase member archipelago (ago) to regulate Myc and CycE stability and thus control cell growth and proliferation. Also appears to regulate ago by modulating its induction by Myc. May also promote cell apoptosis in the wing imaginal disk, acting in an apoptotic pathway that appears to be largely independent of Myc. Required for preventing the activation of the immune deficiency (Imd) and Toll signaling cascades under unchallenged conditions. Also appears to be involved in modulating the differential expression of certain antimicrobial peptides (AMP) in response to infection by either Gram-positive or Gram-negative bacteria. Involved in the regulation of DNA damage repair pathways, including euchromatic site-specific double strand break (DSB) repair. This is Ubiquitin carboxyl-terminal hydrolase puf from Drosophila melanogaster (Fruit fly).